The primary structure comprises 310 residues: Thymidine kinase (310 aa).

Residue 17-24 coordinates ATP; that stretch reads GPFGIGKT. Glutamate 45 (proton acceptor) is an active-site residue. Glutamine 86 contacts substrate. Arginine 176 contacts ATP. Arginine 182 lines the substrate pocket.

Belongs to the herpesviridae thymidine kinase family. Homodimer.

It carries out the reaction thymidine + ATP = dTMP + ADP + H(+). In terms of biological role, catalyzes the transfer of the gamma-phospho group of ATP to thymidine to generate dTMP in the salvage pathway of pyrimidine synthesis. The dTMP serves as a substrate for DNA polymerase during viral DNA replication. Allows the virus to be reactivated and to grow in non-proliferative cells lacking a high concentration of phosphorylated nucleic acid precursors. The protein is Thymidine kinase of Gallus gallus (Chicken).